We begin with the raw amino-acid sequence, 448 residues long: MSRKLITINQVKDYVGQEVTIGAWVANKSGKGKLAFLQLRDGTAFFQAVAFKPNFIEKFGEEAGTEKFDVAKRLSQETSVYVTGIVKEDERSKFGYELDVTDLEVIGESQDYPITPKEHGTDFLMDNRHLWLRSRKQVAIQQIRNAIIYATYEFFEKNGFIKFDSPILSGNAAEDSTELFETDYFGQLAYLSQSGQLYLEAGAMALGRVFDFGPVFRAEKSKTRRHLTEFWMMDAEYSFLSHEESLDLQEAYVKALIQGVIDRAPQALETLERDVDALKRYIAEPFKRVAYDDAITLLQEHEADKDTDYEHIEHGDDFGSPHETWISNYFGVPTFVVNYPASFKAFYMKPVPGNPERVLCADLLAPEGYGEIIGGSMREDNYDALVAKMDELGMDKSEYEFYLDLRKYGSVPHGGFGIGIERMVTFVAGTKHIREAIPFPRMLHRLHP.

This sequence belongs to the class-II aminoacyl-tRNA synthetase family. In terms of assembly, homodimer.

The protein resides in the cytoplasm. The enzyme catalyses tRNA(Asn) + L-asparagine + ATP = L-asparaginyl-tRNA(Asn) + AMP + diphosphate + H(+). The sequence is that of Asparagine--tRNA ligase from Streptococcus suis (strain 98HAH33).